Here is a 195-residue protein sequence, read N- to C-terminus: dTTP/UTP pyrophosphatase (195 aa).

The active-site Proton acceptor is the aspartate 70.

Belongs to the Maf family. YhdE subfamily. Requires a divalent metal cation as cofactor.

Its subcellular location is the cytoplasm. The enzyme catalyses dTTP + H2O = dTMP + diphosphate + H(+). It catalyses the reaction UTP + H2O = UMP + diphosphate + H(+). Functionally, nucleoside triphosphate pyrophosphatase that hydrolyzes dTTP and UTP. May have a dual role in cell division arrest and in preventing the incorporation of modified nucleotides into cellular nucleic acids. The chain is dTTP/UTP pyrophosphatase from Methanococcoides burtonii (strain DSM 6242 / NBRC 107633 / OCM 468 / ACE-M).